A 197-amino-acid polypeptide reads, in one-letter code: MQRASRLKRELHMLATEPPPGITCWQDKDQMDDLRAQILGGANTPYEKGVFKLEVIIPERYPFEPPQIRFLTPIYHPNIDSAGRICLDVLKLPPKGAWRPSLNIATVLTSIQLLMSEPNPDDPLMADISSEFKYNKPAFLKNARQWTEKHARQKQKADEEEMLDNLPEAGDSRVHNSTQKRKASQLVGIEKKFHPDV.

The region spanning 2-152 (QRASRLKREL…ARQWTEKHAR (151 aa)) is the UBC core domain. Residue cysteine 86 is the Glycyl thioester intermediate of the active site. Residues lysine 91 and lysine 182 each participate in a glycyl lysine isopeptide (Lys-Gly) (interchain with G-Cter in ubiquitin) cross-link. The segment at 149 to 197 (KHARQKQKADEEEMLDNLPEAGDSRVHNSTQKRKASQLVGIEKKFHPDV) is disordered. Serine 184 carries the post-translational modification Phosphoserine. Glycyl lysine isopeptide (Lys-Gly) (interchain with G-Cter in SUMO2) cross-links involve residues lysine 191 and lysine 192.

This sequence belongs to the ubiquitin-conjugating enzyme family. As to quaternary structure, directly interacts with FANCL. Interacts with BRCA1. In terms of processing, auto-ubiquitinated. Effects of auto-monoubiquitination at Lys-91 and Lys-182 are unclear: according to a report, monoubiquitination inactivates E2 enzyme activity. In contrast, according to another report, autoubiquitination does not affect E2 enzyme activity.

Its subcellular location is the nucleus. The catalysed reaction is S-ubiquitinyl-[E1 ubiquitin-activating enzyme]-L-cysteine + [E2 ubiquitin-conjugating enzyme]-L-cysteine = [E1 ubiquitin-activating enzyme]-L-cysteine + S-ubiquitinyl-[E2 ubiquitin-conjugating enzyme]-L-cysteine.. It participates in protein modification; protein ubiquitination. Its function is as follows. Accepts ubiquitin from the E1 complex and catalyzes its covalent attachment to other proteins. Catalyzes monoubiquitination. Involved in mitomycin-C (MMC)-induced DNA repair. Acts as a specific E2 ubiquitin-conjugating enzyme for the Fanconi anemia complex by associating with E3 ubiquitin-protein ligase FANCL and catalyzing monoubiquitination of FANCD2, a key step in the DNA damage pathway. Also mediates monoubiquitination of FANCL and FANCI. May contribute to ubiquitination and degradation of BRCA1. In vitro able to promote polyubiquitination using all 7 ubiquitin Lys residues, but may prefer 'Lys-11'-, 'Lys-27'-, 'Lys-48'- and 'Lys-63'-linked polyubiquitination. In Homo sapiens (Human), this protein is Ubiquitin-conjugating enzyme E2 T (UBE2T).